A 171-amino-acid chain; its full sequence is MTAICTDKTELNASWNTVSSAWLTRYPNPYSLHVVSADVLERYVDDEGRLYTERLLVKQGRLPRWASDLLNVNKSYILERSVIDPSKQELKSETFNLDHVKILRVIEYSRFIQSSENCSKTIVDTIAKFVSPLRFGLGRRVQKYSLKRFQEQLSSSRRGLLYVIQQKFQPS.

A required for mitochondrial targeting region spans residues 1-79; the sequence is MTAICTDKTE…LNVNKSYILE (79 aa). A PRELI/MSF1 domain is found at 2-171; sequence TAICTDKTEL…YVIQQKFQPS (170 aa).

It is found in the mitochondrion inner membrane. The protein resides in the mitochondrion intermembrane space. Its function is as follows. Required for maintenance of normal mitochondrial morphology as well as PCP1-dependent processing of MGM1. This Schizosaccharomyces pombe (strain 972 / ATCC 24843) (Fission yeast) protein is Protein ups1 homolog.